Reading from the N-terminus, the 447-residue chain is Serine/threonine-protein kinase NLK2 (447 aa).

The Protein kinase domain maps to 60 to 349 (PEPDRPIGYG…AKDALAHPYL (290 aa)). ATP contacts are provided by residues 66-74 (IGYGAFGVV) and lysine 89. The active-site Proton acceptor is aspartate 186.

Belongs to the protein kinase superfamily. CMGC Ser/Thr protein kinase family. MAP kinase subfamily. Interacts with sox11, hmgxb4/hmg2l1, rnf138/narf, stat3.1 and mef2a. Mg(2+) serves as cofactor. As to expression, expressed widely in the ectoderm during early gastrula stage when neural induction is taking place. Expressed in the head region of neurula stage embryos. At the end of neurulation, expression becomes localized to the nervous system, and is restricted to the central nervous system, eye and head neural crest cells by the early tadpole stages.

The protein localises to the nucleus. It localises to the cytoplasm. The enzyme catalyses L-seryl-[protein] + ATP = O-phospho-L-seryl-[protein] + ADP + H(+). It carries out the reaction L-threonyl-[protein] + ATP = O-phospho-L-threonyl-[protein] + ADP + H(+). Activated by tyrosine and threonine phosphorylation. Functionally, negatively regulates Wnt/beta-catenin-signaling during development. Plays a role together with sox11 in neural induction during early embryogenesis. Involved in TGFbeta-mediated mesoderm induction in early embryos, acting downstream of map3k7/tak1 to phosphorylate stat3.1. Augments the rnf138/narf-directed ubiquitination and degradation of tcf/lef by enhancing the association of rnf138/narf and tcf/lef. Phosphorylates mef2a to play a role in anterior neural development, including eye formation. This chain is Serine/threonine-protein kinase NLK2 (nlk.2), found in Xenopus laevis (African clawed frog).